Reading from the N-terminus, the 137-residue chain is Large ribosomal subunit protein uL16 (137 aa).

The protein belongs to the universal ribosomal protein uL16 family. Part of the 50S ribosomal subunit.

In terms of biological role, binds 23S rRNA and is also seen to make contacts with the A and possibly P site tRNAs. This is Large ribosomal subunit protein uL16 from Lactococcus lactis subsp. lactis (strain IL1403) (Streptococcus lactis).